The sequence spans 173 residues: MDIAIQHPWFRRALGYPSRLFDQFFGEGLFDYDLFPYATSTVSPYYRYSLFRNFLDSSNSGMSEVRSDRDKFMVYLDVKHFSPEELNVKVAEDYVEIQGKHGERQDDHGYISREFHRRYRLPSNVDQSAITCTLSADGQLTICGPKSGGSESGRGDRSIPVTRDDKTNSTPSS.

An N-acetylmethionine modification is found at Met1. Residues 53-164 (NFLDSSNSGM…GDRSIPVTRD (112 aa)) form the sHSP domain. Residues His101, Glu103, and His108 each contribute to the Zn(2+) site. Cysteines 132 and 143 form a disulfide. Residues 143-173 (CGPKSGGSESGRGDRSIPVTRDDKTNSTPSS) are disordered. The segment covering 153-167 (GRGDRSIPVTRDDKT) has biased composition (basic and acidic residues).

Belongs to the small heat shock protein (HSP20) family. As to quaternary structure, heteropolymer composed of three CRYAA and one CRYAB subunits. Inter-subunit bridging via zinc ions enhances stability, which is crucial as there is no protein turn over in the lens. Zinc coordination is achieved at least by His-101, Glu-103 and His-108. His-101 and Glu-103 come from the same molecule within the oligomer, while His-108 residue is provided by another molecule. Can also form homodimers and homotetramers (dimers of dimers) which serve as the building blocks of homooligomers. Part of a complex required for lens intermediate filament formation composed of BFSP1, BFSP2 and CRYAA.

It localises to the cytoplasm. The protein localises to the nucleus. Its function is as follows. Contributes to the transparency and refractive index of the lens. May act as a chaperone, preventing aggregation of various proteins under a wide range of stress conditions. The protein is Alpha-crystallin A chain (cryaa) of Psalidodon fasciatus (Banded astyanax).